The sequence spans 201 residues: Small ribosomal subunit protein uS4c (201 aa).

The 64-residue stretch at 90 to 153 (MRLDNVIFRL…SSQNLVKRYL (64 aa)) folds into the S4 RNA-binding domain.

It belongs to the universal ribosomal protein uS4 family. As to quaternary structure, part of the 30S ribosomal subunit. Contacts protein S5. The interaction surface between S4 and S5 is involved in control of translational fidelity.

It localises to the plastid. The protein resides in the chloroplast. Functionally, one of the primary rRNA binding proteins, it binds directly to 16S rRNA where it nucleates assembly of the body of the 30S subunit. Its function is as follows. With S5 and S12 plays an important role in translational accuracy. The protein is Small ribosomal subunit protein uS4c (rps4) of Gracilaria tenuistipitata var. liui (Red alga).